Here is a 415-residue protein sequence, read N- to C-terminus: MELRVGNRYRLGRKIGSGSFGDIYLGTDIAAGEEVAIKLECVKTKPPQLHIESKIYKMMQGGVGIPTIRWCGAEGDYNVMVMELLGPSLEDLFNFCSRKFSLKTILLLADQMISRIEYIHSKNFIHRDVKPDNFLMGLGKKGNLVYIIDFGLAKKYRDARTHQHIPYRENKNLTGTARYASINTHLGIEQSRRDDLESLGYVLMYFNLGSLPWQGLKAATKRQKYERISEKKMSTPIEVLCKGYPSEFATYLNFCRSLRFDDKPDYSYLRQLFRNLFHRQGFSYDYVFDWNMLKFGASRAADDAERERRDREERLRHSRNPATRGLPSTASGRLRGTQEVAPPTPLTPTSHTANTSPRPVSGMERERKVSMRLHRGAPVNISSSDLTGRQDTSRMSTSQIPGRVASSGLQSVVHR.

The Protein kinase domain maps to 9–277 (YRLGRKIGSG…YLRQLFRNLF (269 aa)). ATP is bound by residues 15 to 23 (IGSGSFGDI) and lysine 38. The Proton acceptor role is filled by aspartate 128. A centrosomal localization signal (CLS) region spans residues 278–364 (HRQGFSYDYV…TSPRPVSGME (87 aa)). Over residues 301-315 (ADDAERERRDREERL) the composition is skewed to basic and acidic residues. Residues 301 to 415 (ADDAERERRD…SSGLQSVVHR (115 aa)) form a disordered region. The interval 317-342 (HSRNPATRGLPSTASGRLRGTQEVAP) is autoinhibitory. A phosphoserine mark is found at serine 328 and serine 331. Polar residues predominate over residues 347–358 (TPTSHTANTSPR). Serine 370 is modified (phosphoserine). Arginine 375 is modified (omega-N-methylarginine). The segment covering 380-400 (NISSSDLTGRQDTSRMSTSQI) has biased composition (polar residues). A phosphoserine mark is found at serine 382, serine 383, serine 384, serine 407, and serine 411.

Belongs to the protein kinase superfamily. CK1 Ser/Thr protein kinase family. Casein kinase I subfamily. Monomer. Component of the circadian core oscillator, which includes the CRY proteins, CLOCK, or NPAS2, ARTNL/BMAL1 or ARTNL2/BMAL2, CSNK1D and/or CSNK1E, TIMELESS and the PER proteins. Interacts with DNMT1 and MAP1A. Interacts directly with PER1 and PER2 which may lead to their degradation. Interacts with MAPT/TAU, SNAPIN, DBNDD2, AIB1/NCOA3 and ESR1. Interacts with AKAP9/AKAP450; this interaction promotes centrosomal subcellular location. Binds to tubulins in mitotic cells upon DNA damage. Interacts with GJA1. Interacts with DDX3X; this interaction enhances CSNK1D kinase activity in vitro, but it is unclear whether this interaction is physiologically relevant. Interacts with FAM83A, FAM83B, FAM83E and FAM83H (via DUF1669). Autophosphorylated on serine and threonine residues; this autophosphorylation represses activity. Reactivated by phosphatase-mediated dephosphorylation. May be dephosphorylated by PP1.

The protein resides in the cytoplasm. It localises to the nucleus. Its subcellular location is the cytoskeleton. The protein localises to the microtubule organizing center. It is found in the centrosome. The protein resides in the perinuclear region. It localises to the cell membrane. Its subcellular location is the spindle. The protein localises to the golgi apparatus. The catalysed reaction is L-seryl-[protein] + ATP = O-phospho-L-seryl-[protein] + ADP + H(+). It carries out the reaction L-threonyl-[protein] + ATP = O-phospho-L-threonyl-[protein] + ADP + H(+). The enzyme catalyses L-seryl-[tau protein] + ATP = O-phospho-L-seryl-[tau protein] + ADP + H(+). It catalyses the reaction L-threonyl-[tau protein] + ATP = O-phospho-L-threonyl-[tau protein] + ADP + H(+). Its activity is regulated as follows. Exhibits substrate-dependent heparin activation. Drug-mediated inhibition leads to a delay of the oscillations with the magnitude of this effect dependent upon the timing of drug administration. Inhibited by phosphorylation. In terms of biological role, essential serine/threonine-protein kinase that regulates diverse cellular growth and survival processes including Wnt signaling, DNA repair and circadian rhythms. It can phosphorylate a large number of proteins. Casein kinases are operationally defined by their preferential utilization of acidic proteins such as caseins as substrates. Phosphorylates connexin-43/GJA1, MAP1A, SNAPIN, MAPT/TAU, TOP2A, DCK, HIF1A, EIF6, p53/TP53, DVL2, DVL3, ESR1, AIB1/NCOA3, DNMT1, PKD2, YAP1, PER1 and PER2. Central component of the circadian clock. In balance with PP1, determines the circadian period length through the regulation of the speed and rhythmicity of PER1 and PER2 phosphorylation. Controls PER1 and PER2 nuclear transport and degradation. YAP1 phosphorylation promotes its SCF(beta-TRCP) E3 ubiquitin ligase-mediated ubiquitination and subsequent degradation. DNMT1 phosphorylation reduces its DNA-binding activity. Phosphorylation of ESR1 and AIB1/NCOA3 stimulates their activity and coactivation. Phosphorylation of DVL2 and DVL3 regulates WNT3A signaling pathway that controls neurite outgrowth. Phosphorylates NEDD9/HEF1. EIF6 phosphorylation promotes its nuclear export. Triggers down-regulation of dopamine receptors in the forebrain. Activates DCK in vitro by phosphorylation. TOP2A phosphorylation favors DNA cleavable complex formation. May regulate the formation of the mitotic spindle apparatus in extravillous trophoblast. Modulates connexin-43/GJA1 gap junction assembly by phosphorylation. Probably involved in lymphocyte physiology. Regulates fast synaptic transmission mediated by glutamate. In Pongo abelii (Sumatran orangutan), this protein is Casein kinase I isoform delta (CSNK1D).